Here is a 596-residue protein sequence, read N- to C-terminus: Elongation factor 4 (596 aa).

Positions 2-184 (DHIRNFSIIA…AVVARIPPPK (183 aa)) constitute a tr-type G domain. Residues 14-19 (DHGKST) and 131-134 (NKID) each bind GTP.

It belongs to the TRAFAC class translation factor GTPase superfamily. Classic translation factor GTPase family. LepA subfamily.

Its subcellular location is the cell inner membrane. The catalysed reaction is GTP + H2O = GDP + phosphate + H(+). In terms of biological role, required for accurate and efficient protein synthesis under certain stress conditions. May act as a fidelity factor of the translation reaction, by catalyzing a one-codon backward translocation of tRNAs on improperly translocated ribosomes. Back-translocation proceeds from a post-translocation (POST) complex to a pre-translocation (PRE) complex, thus giving elongation factor G a second chance to translocate the tRNAs correctly. Binds to ribosomes in a GTP-dependent manner. In Dechloromonas aromatica (strain RCB), this protein is Elongation factor 4.